Here is an 874-residue protein sequence, read N- to C-terminus: Pyruvate, phosphate dikinase (874 aa).

Positions 2–340 (AKWVYKFEEG…LYFLQTRNGK (339 aa)) are N-terminal. R92 is an ATP binding site. A linker 1 region spans residues 340 to 399 (KRTAPAALQIACDLVDEGMITEEEAVVRIEAKSLDQLLHPTFNPAALKAGEVIGSALPAS). Residues 400-498 (PGAAAGKVYF…TFAEGDYISL (99 aa)) form a central region. T453 bears the Phosphothreonine; by PDRP1 mark. Catalysis depends on H455, which acts as the Tele-phosphohistidine intermediate. Positions 499-533 (DGSTGKIYKGDIETQEASVSGSFERIMVWADKFRT) are linker 2. A C-terminal region spans residues 534–874 (LKVRTNADTP…AAAQAALNNK (341 aa)). Substrate is bound by residues R561, R617, E745, G766, T767, N768, and D769. Residue E745 participates in Mg(2+) binding. D769 lines the Mg(2+) pocket. Catalysis depends on C831, which acts as the Proton donor.

It belongs to the PEP-utilizing enzyme family. Homodimer. The cofactor is Mg(2+). In terms of processing, phosphorylation of Thr-453 in the dark inactivates the enzyme. Dephosphorylation upon light stimulation reactivates the enzyme.

The enzyme catalyses pyruvate + phosphate + ATP = phosphoenolpyruvate + AMP + diphosphate + H(+). With respect to regulation, activated by light-induced dephosphorylation. Inhibited by dark-induced phosphorylation. Both reactions are catalyzed by PDRP1. In terms of biological role, catalyzes the reversible phosphorylation of pyruvate and phosphate. In E.histolytica and C.symbiosus, PPDK functions in the direction of ATP synthesis. The protein is Pyruvate, phosphate dikinase (ppdK) of Clostridium symbiosum (Bacteroides symbiosus).